The sequence spans 447 residues: Histidine--tRNA ligase (447 aa).

Belongs to the class-II aminoacyl-tRNA synthetase family. As to quaternary structure, homodimer.

The protein localises to the cytoplasm. It carries out the reaction tRNA(His) + L-histidine + ATP = L-histidyl-tRNA(His) + AMP + diphosphate + H(+). This is Histidine--tRNA ligase (hisS) from Synechocystis sp. (strain ATCC 27184 / PCC 6803 / Kazusa).